The following is a 592-amino-acid chain: Isocitrate dehydrogenase kinase/phosphatase 1 (592 aa).

Residues 337 to 343 (APGTPGM) and lysine 358 each bind ATP. Aspartate 393 is a catalytic residue.

It belongs to the AceK family.

It localises to the cytoplasm. The catalysed reaction is L-seryl-[isocitrate dehydrogenase] + ATP = O-phospho-L-seryl-[isocitrate dehydrogenase] + ADP + H(+). Its function is as follows. Bifunctional enzyme which can phosphorylate or dephosphorylate isocitrate dehydrogenase (IDH) on a specific serine residue. This is a regulatory mechanism which enables bacteria to bypass the Krebs cycle via the glyoxylate shunt in response to the source of carbon. When bacteria are grown on glucose, IDH is fully active and unphosphorylated, but when grown on acetate or ethanol, the activity of IDH declines drastically concomitant with its phosphorylation. This is Isocitrate dehydrogenase kinase/phosphatase 1 from Pseudoalteromonas translucida (strain TAC 125).